The following is a 243-amino-acid chain: DNA repair protein RecO (243 aa).

The protein belongs to the RecO family.

Involved in DNA repair and RecF pathway recombination. The protein is DNA repair protein RecO of Xylella fastidiosa (strain M12).